The following is a 78-amino-acid chain: Small ribosomal subunit protein bS18 (78 aa).

This sequence belongs to the bacterial ribosomal protein bS18 family. Part of the 30S ribosomal subunit. Forms a tight heterodimer with protein bS6.

In terms of biological role, binds as a heterodimer with protein bS6 to the central domain of the 16S rRNA, where it helps stabilize the platform of the 30S subunit. This Lactobacillus acidophilus (strain ATCC 700396 / NCK56 / N2 / NCFM) protein is Small ribosomal subunit protein bS18.